The following is a 396-amino-acid chain: Odorant receptor 49a (396 aa).

At 1–6 (MEKLRS) the chain is on the cytoplasmic side. The helical transmembrane segment at 7-27 (YEDFIFMANMMFKTLGYDLFH) threads the bilayer. The Extracellular portion of the chain corresponds to 28 to 34 (TPKPWWR). A helical membrane pass occupies residues 35–55 (YLLVRGYFVLCTISNFYEASM). The Cytoplasmic segment spans residues 56–70 (VTTRIIEWESLAGSP). Residues 71 to 91 (SKIMRQGLHFFYMLSSQLKFI) traverse the membrane as a helical segment. Residues 92–141 (TFMINRKRLLQLSHRLKELYPHKEQNQRKYEVNKYYLSCSTRNVLYVYYF) are Extracellular-facing. The chain crosses the membrane as a helical span at residues 142 to 162 (VMVVMALEPLVQSCIMYLIGF). The Cytoplasmic segment spans residues 163–209 (GKADFTYKRIFPTRLTFDSEKPLGYVLAYVIDFTYSQFIVNVSLGTD). A helical transmembrane segment spans residues 210 to 230 (LWMMCVSSQISMHLGYLANML). Topologically, residues 231-266 (ASIRPSPETEQQDCDFLASIIKRHQLMIRLQKDVNY) are extracellular. A helical transmembrane segment spans residues 267–287 (VFGLLLASNLFTTSCLLCCMA). Residues 288–296 (YYTVVEGFN) are Cytoplasmic-facing. Residues 297 to 317 (WEGISYMMLFASVAAQFYVVS) form a helical membrane-spanning segment. Topologically, residues 318–396 (SHGQMLIDLS…FAVIRQTVEK (79 aa)) are extracellular.

The protein belongs to the insect chemoreceptor superfamily. Heteromeric odorant receptor channel (TC 1.A.69) family. Or49a subfamily. Interacts with Orco. Complexes exist early in the endomembrane system in olfactory sensory neurons (OSNs), coupling these complexes to the conserved ciliary trafficking pathway.

The protein resides in the cell membrane. Odorant receptor which mediates acceptance or avoidance behavior, depending on its substrates. The odorant receptor repertoire encodes a large collection of odor stimuli that vary widely in identity, intensity, and duration. May form a complex with Orco to form odorant-sensing units, providing sensitive and prolonged odorant signaling and calcium permeability. Involved in the behavioral responses to butanol and 2-heptanone. The sequence is that of Odorant receptor 49a (Or49a) from Drosophila melanogaster (Fruit fly).